The primary structure comprises 488 residues: Bifunctional protein GlmU (488 aa).

Positions 1–237 (MPRTRTPLAA…AEEASGVNDR (237 aa)) are pyrophosphorylase. UDP-N-acetyl-alpha-D-glucosamine-binding positions include 13–16 (LAAG), Lys-27, Gln-82, 87–88 (GT), 110–112 (SGD), Gly-149, Glu-164, Asn-179, and Asn-235. Asp-112 contacts Mg(2+). Asn-235 is a Mg(2+) binding site. Residues 238–258 (IELARANRVMVGRLAEAFMRA) are linker. The N-acetyltransferase stretch occupies residues 259 to 488 (GVTIEDPARF…KGRPAARRAS (230 aa)). UDP-N-acetyl-alpha-D-glucosamine is bound by residues Arg-341 and Lys-359. The Proton acceptor role is filled by His-371. Residues Tyr-374 and Asn-385 each coordinate UDP-N-acetyl-alpha-D-glucosamine. Residues Ala-388, 394–395 (NY), Ser-413, Ala-431, and Arg-448 each bind acetyl-CoA. The interval 459 to 488 (AQRQAEKQMKGTATGPAPARKGRPAARRAS) is disordered. Basic residues predominate over residues 478–488 (RKGRPAARRAS).

It in the N-terminal section; belongs to the N-acetylglucosamine-1-phosphate uridyltransferase family. The protein in the C-terminal section; belongs to the transferase hexapeptide repeat family. Homotrimer. It depends on Mg(2+) as a cofactor.

Its subcellular location is the cytoplasm. The enzyme catalyses alpha-D-glucosamine 1-phosphate + acetyl-CoA = N-acetyl-alpha-D-glucosamine 1-phosphate + CoA + H(+). It carries out the reaction N-acetyl-alpha-D-glucosamine 1-phosphate + UTP + H(+) = UDP-N-acetyl-alpha-D-glucosamine + diphosphate. Its pathway is nucleotide-sugar biosynthesis; UDP-N-acetyl-alpha-D-glucosamine biosynthesis; N-acetyl-alpha-D-glucosamine 1-phosphate from alpha-D-glucosamine 6-phosphate (route II): step 2/2. The protein operates within nucleotide-sugar biosynthesis; UDP-N-acetyl-alpha-D-glucosamine biosynthesis; UDP-N-acetyl-alpha-D-glucosamine from N-acetyl-alpha-D-glucosamine 1-phosphate: step 1/1. It functions in the pathway bacterial outer membrane biogenesis; LPS lipid A biosynthesis. In terms of biological role, catalyzes the last two sequential reactions in the de novo biosynthetic pathway for UDP-N-acetylglucosamine (UDP-GlcNAc). The C-terminal domain catalyzes the transfer of acetyl group from acetyl coenzyme A to glucosamine-1-phosphate (GlcN-1-P) to produce N-acetylglucosamine-1-phosphate (GlcNAc-1-P), which is converted into UDP-GlcNAc by the transfer of uridine 5-monophosphate (from uridine 5-triphosphate), a reaction catalyzed by the N-terminal domain. This chain is Bifunctional protein GlmU, found in Anaeromyxobacter dehalogenans (strain 2CP-C).